Consider the following 481-residue polypeptide: MFS transporter eqxG (481 aa).

Low complexity predominate over residues 1 to 13 (MATTDPAIAAPDD). A disordered region spans residues 1 to 58 (MATTDPAIAAPDDSQLEAGRENIRANVGDALEKPSSSTGTMVDEPTDPNVVDWDGPHD). N-linked (GlcNAc...) asparagine glycosylation occurs at Asn-64. A helical transmembrane segment spans residues 72–92 (LHLVIVSLFTLAANLAATMFA). N-linked (GlcNAc...) asparagine glycosylation is present at Asn-106. The next 10 helical transmembrane spans lie at 111 to 131 (AMTV…LAPL), 146 to 166 (FVYV…MFLV), 169 to 189 (IICG…VADL), 201 to 221 (LFTV…TVIF), 276 to 296 (PIVL…FLLF), 315 to 335 (GLAY…FSVL), 353 to 373 (LILM…YGWT), 380 to 400 (WIVP…VVIP), 403 to 423 (IYLV…ANLL), and 439 to 459 (LYVS…CLLF).

The protein belongs to the major facilitator superfamily.

Its subcellular location is the cell membrane. Efflux pump that might be required for efficient secretion of equisetin or other secondary metabolies produced by the equisetin gene cluster. This is MFS transporter eqxG from Fusarium heterosporum.